We begin with the raw amino-acid sequence, 276 residues long: Diaminopimelate epimerase (276 aa).

Substrate contacts are provided by asparagine 13, glutamine 46, and asparagine 66. Residue cysteine 75 is the Proton donor of the active site. Residues 76–77 (GN), asparagine 159, asparagine 192, and 210–211 (ER) contribute to the substrate site. The active-site Proton acceptor is cysteine 219. A substrate-binding site is contributed by 220 to 221 (GT).

Belongs to the diaminopimelate epimerase family. In terms of assembly, homodimer.

It localises to the cytoplasm. The enzyme catalyses (2S,6S)-2,6-diaminopimelate = meso-2,6-diaminopimelate. It participates in amino-acid biosynthesis; L-lysine biosynthesis via DAP pathway; DL-2,6-diaminopimelate from LL-2,6-diaminopimelate: step 1/1. Catalyzes the stereoinversion of LL-2,6-diaminopimelate (L,L-DAP) to meso-diaminopimelate (meso-DAP), a precursor of L-lysine and an essential component of the bacterial peptidoglycan. The polypeptide is Diaminopimelate epimerase (Aeromonas salmonicida (strain A449)).